A 284-amino-acid polypeptide reads, in one-letter code: Acetyl-coenzyme A carboxylase carboxyl transferase subunit beta (284 aa).

The CoA carboxyltransferase N-terminal domain occupies 24–284; that stretch reads GLWYKSPTGK…LDLILNNEVR (261 aa).

It belongs to the AccD/PCCB family. As to quaternary structure, acetyl-CoA carboxylase is a heterohexamer composed of biotin carboxyl carrier protein (AccB), biotin carboxylase (AccC) and two subunits each of ACCase subunit alpha (AccA) and ACCase subunit beta (AccD).

The protein resides in the cytoplasm. It catalyses the reaction N(6)-carboxybiotinyl-L-lysyl-[protein] + acetyl-CoA = N(6)-biotinyl-L-lysyl-[protein] + malonyl-CoA. Its pathway is lipid metabolism; malonyl-CoA biosynthesis; malonyl-CoA from acetyl-CoA: step 1/1. In terms of biological role, component of the acetyl coenzyme A carboxylase (ACC) complex. Biotin carboxylase (BC) catalyzes the carboxylation of biotin on its carrier protein (BCCP) and then the CO(2) group is transferred by the transcarboxylase to acetyl-CoA to form malonyl-CoA. The chain is Acetyl-coenzyme A carboxylase carboxyl transferase subunit beta from Flavobacterium psychrophilum (strain ATCC 49511 / DSM 21280 / CIP 103535 / JIP02/86).